The primary structure comprises 580 residues: Probable glucomannan 4-beta-mannosyltransferase 2 (580 aa).

A compositionally biased stretch (polar residues) spans 1–12; it reads MSTNGGAPSQKR. The disordered stretch occupies residues 1–33; sequence MSTNGGAPSQKRSWLPSRPLLTTTTQTYPPPLL. Over residues 15 to 27 the composition is skewed to low complexity; sequence LPSRPLLTTTTQT. Residues 85 to 105 form a helical membrane-spanning segment; that stretch reads AVWACLAMSAMLVAEAAWMGL. Residue aspartate 182 is part of the active site. Residues aspartate 241 and aspartate 243 each coordinate substrate. Aspartate 335 is a catalytic residue. A run of 4 helical transmembrane segments spans residues 414 to 434, 437 to 457, 528 to 548, and 554 to 574; these read AIAPILTFLFYCIVIPLSAMV, VTIPVWGLVYIPTAITIMNAI, IYIPELLLALYLLICASYDFV, and YYIYIYLQAVAFTVMGFGFVG.

This sequence belongs to the glycosyltransferase 2 family. Plant cellulose synthase-like A subfamily.

The protein localises to the golgi apparatus membrane. It catalyses the reaction GDP-mannose + (glucomannan)n = GDP + (glucomannan)n+1.. Probable mannan synthase which consists of a 4-beta-mannosyltransferase activity on mannan using GDP-mannose. The beta-1,4-mannan product is the backbone for galactomannan synthesis by galactomannan galactosyltransferase. Galactomannan is a noncellulosic polysaccharides of plant cell wall. This is Probable glucomannan 4-beta-mannosyltransferase 2 from Oryza sativa subsp. japonica (Rice).